Consider the following 424-residue polypeptide: MASLLGTSSSAIWASPSLSSPSSKPSSSPICFRPGKLFGSKLNAGIQIRPKKNRSRYHVSVMNVATEINSTEQVVGKFDSKKSARPVYPFAAIVGQDEMKLCLLLNVIDPKIGGVMIMGDRGTGKSTTVRSLVDLLPEINVVAGDPYNSDPIDPEFMGVEVRERVEKGEQVPVIATKINMVDLPLGATEDRVCGTIDIEKALTEGVKAFEPGLLAKANRGILYVDEVNLLDDHLVDVLLDSAASGWNTVEREGISISHPARFILIGSGNPEEGELRPQLLDRFGMHAQVGTVRDADLRVKIVEERARFDSNPKDFRDTYKTEQDKLQDQISTARANLSSVQIDRELKVKISRVCSELNVDGLRGDIVTNRAAKALAALKGKDRVTPDDVATVIPNCLRHRLRKDPLESIDSGVLVSEKFAEIFS.

The N-terminal 60 residues, 1–60, are a transit peptide targeting the chloroplast; that stretch reads MASLLGTSSSAIWASPSLSSPSSKPSSSPICFRPGKLFGSKLNAGIQIRPKKNRSRYHVS. V61 is modified (N-acetylvaline). Disulfide bonds link C102–C193 and C354–C396. 119–126 is a binding site for ATP; the sequence is GDRGTGKS. S355 is subject to Phosphoserine.

This sequence belongs to the Mg-chelatase subunits D/I family. The magnesium chelatase complex is a heterotrimer consisting of subunits CHLI, CHLD and CHLH. Interacts with CHLH and CHLD.

It is found in the plastid. The protein localises to the chloroplast. The catalysed reaction is protoporphyrin IX + Mg(2+) + ATP + H2O = Mg-protoporphyrin IX + ADP + phosphate + 3 H(+). Its pathway is porphyrin-containing compound metabolism; chlorophyll biosynthesis. Its activity is regulated as follows. Redox regulation; active in reducing conditions, inactive in oxidizing conditions. Thioredoxins f and m mediate the reversible reductive activation of oxidized CHLI1. In terms of biological role, involved in chlorophyll biosynthesis. Catalyzes the insertion of magnesium ion into protoporphyrin IX to yield Mg-protoporphyrin IX. The magnesium-chelatase is a complex of three subunits, CHLI, CHLD and CHLH. The reaction takes place in two steps, with an ATP-dependent activation followed by an ATP-dependent chelation step. Possesses high affinity for ATP and may play a major role in chlorophyll biosynthesis. Does not bind abscisic acid (ABA), but is a positive regulator of ABA signaling. May be involved in ABA signaling in the control of stomatal aperture, but does not seem to have an effect on ABA-induced gene expression. The protein is Magnesium-chelatase subunit ChlI-1, chloroplastic (CHLI1) of Arabidopsis thaliana (Mouse-ear cress).